The primary structure comprises 185 residues: MMDEILLECEERMTSSVEFAREDLTTIRTGRANPAMFNSVIAEYYGVPTPITQMATISVPEARMMLIKPYEQSQIQVIENAIRNSDLGVNPTNDGQVLRVTIPQLTEERRREMVRQAKSKGEDAKIAIRNIRRHGMEQLAKIQKDGDAGEDEVRASENELEKITSNYVKQVDELVERKEEELMEV.

The protein belongs to the RRF family.

It localises to the cytoplasm. In terms of biological role, responsible for the release of ribosomes from messenger RNA at the termination of protein biosynthesis. May increase the efficiency of translation by recycling ribosomes from one round of translation to another. The sequence is that of Ribosome-recycling factor from Corynebacterium urealyticum (strain ATCC 43042 / DSM 7109).